Here is a 347-residue protein sequence, read N- to C-terminus: Microneme protein 21 (347 aa).

Its subcellular location is the cytoplasmic vesicle. The protein resides in the secretory vesicle. The protein localises to the microneme. It localises to the secreted. The chain is Microneme protein 21 from Toxoplasma gondii.